The primary structure comprises 339 residues: D-erythrose-4-phosphate dehydrogenase (339 aa).

NAD(+) is bound at residue 12-13; the sequence is RI. Substrate-binding positions include 154–156, R200, 213–214, and R236; these read SCT and TK. The Nucleophile role is filled by C155. N318 serves as a coordination point for NAD(+).

It belongs to the glyceraldehyde-3-phosphate dehydrogenase family. Epd subfamily. As to quaternary structure, homotetramer.

The protein localises to the cytoplasm. It carries out the reaction D-erythrose 4-phosphate + NAD(+) + H2O = 4-phospho-D-erythronate + NADH + 2 H(+). Its pathway is cofactor biosynthesis; pyridoxine 5'-phosphate biosynthesis; pyridoxine 5'-phosphate from D-erythrose 4-phosphate: step 1/5. Functionally, catalyzes the NAD-dependent conversion of D-erythrose 4-phosphate to 4-phosphoerythronate. This Photorhabdus laumondii subsp. laumondii (strain DSM 15139 / CIP 105565 / TT01) (Photorhabdus luminescens subsp. laumondii) protein is D-erythrose-4-phosphate dehydrogenase.